The primary structure comprises 397 residues: 2-acyl-1-lysophosphatidylinositol acyltransferase (397 aa).

The HXXXXD motif signature appears at 112 to 117; the sequence is HQIYTD.

This sequence belongs to the 1-acyl-sn-glycerol-3-phosphate acyltransferase family.

The protein localises to the lipid droplet. It catalyses the reaction 1-heptadecanoyl-sn-glycero-3-phosphate + octadecanoyl-CoA = 1-heptadecanoyl-2-octadecanoyl-sn-glycero-3-phosphate + CoA. The catalysed reaction is 1-heptadecanoyl-sn-glycero-3-phosphate + tetradecanoyl-CoA = 1-heptadecanoyl-2-tetradecanoyl-sn-glycero-3-phosphate + CoA. The enzyme catalyses 1-heptadecanoyl-sn-glycero-3-phosphate + hexadecanoyl-CoA = 1-heptadecanoyl-2-hexadecanoyl-sn-glycero-3-phosphate + CoA. Acyltransferase with lysophosphatidic acid acyltransferase (LPAAT) activity. Fatty acyl substrates include 18:0-acyl-CoA, 16:0-acyl-CoA, 17:0-acyl-CoA and 14:0-acyl-CoA. Responsible for the acyl-CoA-dependent introduction of saturated very long chain fatty acids (VLCFAs) into phosphatidylinositol, transferring saturated FAs with 18 to 26 carbon atoms. Responsible for the incorporation of stearate into phosphatidylinositol. Overexpression has an effect on chromosome stability. Regulates phosphorylation and expression of glycerol-3-phosphate acyltransferase SCT1. The protein is 2-acyl-1-lysophosphatidylinositol acyltransferase of Saccharomyces cerevisiae (strain ATCC 204508 / S288c) (Baker's yeast).